The chain runs to 476 residues: Glycogen synthase (476 aa).

Lysine 15 is an ADP-alpha-D-glucose binding site.

This sequence belongs to the glycosyltransferase 1 family. Bacterial/plant glycogen synthase subfamily.

The enzyme catalyses [(1-&gt;4)-alpha-D-glucosyl](n) + ADP-alpha-D-glucose = [(1-&gt;4)-alpha-D-glucosyl](n+1) + ADP + H(+). It participates in glycan biosynthesis; glycogen biosynthesis. Synthesizes alpha-1,4-glucan chains using ADP-glucose. This is Glycogen synthase from Yersinia enterocolitica serotype O:8 / biotype 1B (strain NCTC 13174 / 8081).